A 205-amino-acid chain; its full sequence is Cbp/p300-interacting transactivator 3 (205 aa).

This sequence belongs to the CITED family.

It is found in the nucleus. In terms of biological role, acts as a transcriptional coactivator. Enhances estrogen-dependent transactivation mediated by estrogen receptors. The sequence is that of Cbp/p300-interacting transactivator 3 (CITED3) from Gallus gallus (Chicken).